The following is a 155-amino-acid chain: Ribonuclease H (155 aa).

One can recognise an RNase H type-1 domain in the interval methionine 1–methionine 142. 4 residues coordinate Mg(2+): aspartate 10, glutamate 48, aspartate 70, and aspartate 134.

The protein belongs to the RNase H family. Monomer. Mg(2+) is required as a cofactor.

It localises to the cytoplasm. The enzyme catalyses Endonucleolytic cleavage to 5'-phosphomonoester.. Endonuclease that specifically degrades the RNA of RNA-DNA hybrids. In Salmonella paratyphi C (strain RKS4594), this protein is Ribonuclease H.